Here is a 1371-residue protein sequence, read N- to C-terminus: Pleckstrin homology-like domain family B member 1 (1371 aa).

S51 is subject to Phosphoserine. The FHA domain maps to 64-125 (TVIGSAARDI…LTQGCMLCLG (62 aa)). R131 carries the post-translational modification Asymmetric dimethylarginine. Residues 153–182 (GPTYNPGSAESESLVNGNHTAQPATRAPSA) form a disordered region. A compositionally biased stretch (polar residues) spans 157–175 (NPGSAESESLVNGNHTAQP). S192, S220, and S223 each carry phosphoserine. Disordered regions lie at residues 211–336 (AAGK…TDSP) and 368–573 (PSSG…RVPI). Low complexity-rich tracts occupy residues 252–273 (SPAF…HSPS) and 296–312 (LQPP…SDSP). A phosphoserine mark is found at S325 and S335. The span at 368 to 377 (PSSGARSQPA) shows a compositional bias: polar residues. Phosphoserine is present on residues S382, S405, S431, S445, S463, S472, S491, and S503. Positions 464–477 (PSLSRRALSPLPAR) are enriched in low complexity. Basic and acidic residues predominate over residues 483-493 (KLSREVAESPR). R514 bears the Omega-N-methylarginine mark. 2 positions are modified to phosphoserine: S520 and S522. Phosphothreonine is present on T524. Phosphoserine is present on residues S535, S541, S553, S557, S565, S580, S585, and S683. Residues 547-559 (GSLTGASPRQSPR) show a composition bias toward polar residues. 2 disordered regions span residues 672–714 (ESGG…GAKH) and 942–1020 (GLAA…QNGT). 2 stretches are compositionally biased toward basic and acidic residues: residues 682-696 (ESME…KEEC) and 703-714 (QQEHEDAPGAKH). Residues 688 to 798 (DEENLKEECS…ETGIQKDRDK (111 aa)) adopt a coiled-coil conformation. Phosphoserine is present on residues S976 and S1022. Residues 976–997 (SPLPRTRSGPLPSSSGSSSSSS) are compositionally biased toward low complexity. Residues 1124–1143 (SMETSISTGGNSACSPDNMS) form a disordered region. Positions 1150-1216 (MGKIEEMEKM…QQLVEKEVKL (67 aa)) form a coiled coil. One can recognise a PH domain in the interval 1261–1364 (SKVCRGYLIK…WMDVIVTGAE (104 aa)).

The protein is Pleckstrin homology-like domain family B member 1 (Phldb1) of Mus musculus (Mouse).